Here is a 247-residue protein sequence, read N- to C-terminus: E3 ubiquitin-protein ligase RNF182 (247 aa).

The RING-type zinc-finger motif lies at 20-68; that stretch reads CKICYNRYNLKQRKPKVLECCHRVCAKCLYKIIDFGDSPQGVIVCPFCR. Transmembrane regions (helical) follow at residues 184-204 and 211-231; these read VLVW…IYLL and LGVV…VYGF.

As to quaternary structure, interacts with ATP6V0C.

The protein localises to the membrane. Its subcellular location is the cytoplasm. It carries out the reaction S-ubiquitinyl-[E2 ubiquitin-conjugating enzyme]-L-cysteine + [acceptor protein]-L-lysine = [E2 ubiquitin-conjugating enzyme]-L-cysteine + N(6)-ubiquitinyl-[acceptor protein]-L-lysine.. Its pathway is protein modification; protein ubiquitination. Its function is as follows. E3 ubiquitin-protein ligase that mediates the ubiquitination of ATP6V0C and targets it to degradation via the ubiquitin-proteasome pathway. Also plays a role in the inhibition of TLR-triggered innate immune response by mediating 'Lys'-48-linked ubiquitination and subsequent degradation of NF-kappa-B component RELA. In Rattus norvegicus (Rat), this protein is E3 ubiquitin-protein ligase RNF182 (Rnf182).